We begin with the raw amino-acid sequence, 140 residues long: Nucleoside diphosphate kinase (140 aa).

ATP contacts are provided by K11, F59, R87, T93, R104, and N114. H117 functions as the Pros-phosphohistidine intermediate in the catalytic mechanism.

This sequence belongs to the NDK family. In terms of assembly, homotetramer. The cofactor is Mg(2+).

It is found in the cytoplasm. The enzyme catalyses a 2'-deoxyribonucleoside 5'-diphosphate + ATP = a 2'-deoxyribonucleoside 5'-triphosphate + ADP. The catalysed reaction is a ribonucleoside 5'-diphosphate + ATP = a ribonucleoside 5'-triphosphate + ADP. In terms of biological role, major role in the synthesis of nucleoside triphosphates other than ATP. The ATP gamma phosphate is transferred to the NDP beta phosphate via a ping-pong mechanism, using a phosphorylated active-site intermediate. This chain is Nucleoside diphosphate kinase, found in Ruegeria sp. (strain TM1040) (Silicibacter sp.).